Here is a 20-residue protein sequence, read N- to C-terminus: GYSSASKIIFGSGTRLSIRP.

As to quaternary structure, alpha-beta TR is a heterodimer composed of an alpha and beta chain; disulfide-linked. The alpha-beta TR is associated with the transmembrane signaling CD3 coreceptor proteins to form the TR-CD3 (TcR or TCR). The assembly of alpha-beta TR heterodimers with CD3 occurs in the endoplasmic reticulum where a single alpha-beta TR heterodimer associates with one CD3D-CD3E heterodimer, one CD3G-CD3E heterodimer and one CD247 homodimer forming a stable octameric structure. CD3D-CD3E and CD3G-CD3E heterodimers preferentially associate with TR alpha and TR beta chains, respectively. The association of the CD247 homodimer is the last step of TcR assembly in the endoplasmic reticulum and is required for transport to the cell surface.

It is found in the cell membrane. Its function is as follows. J region of the variable domain of T cell receptor (TR) alpha chain that participates in the antigen recognition. Alpha-beta T cell receptors are antigen specific receptors which are essential to the immune response and are present on the cell surface of T lymphocytes. Recognize peptide-major histocompatibility (MH) (pMH) complexes that are displayed by antigen presenting cells (APC), a prerequisite for efficient T cell adaptive immunity against pathogens. Binding of alpha-beta TR to pMH complex initiates TR-CD3 clustering on the cell surface and intracellular activation of LCK that phosphorylates the ITAM motifs of CD3G, CD3D, CD3E and CD247 enabling the recruitment of ZAP70. In turn ZAP70 phosphorylates LAT, which recruits numerous signaling molecules to form the LAT signalosome. The LAT signalosome propagates signal branching to three major signaling pathways, the calcium, the mitogen-activated protein kinase (MAPK) kinase and the nuclear factor NF-kappa-B (NF-kB) pathways, leading to the mobilization of transcription factors that are critical for gene expression and essential for T cell growth and differentiation. The T cell repertoire is generated in the thymus, by V-(D)-J rearrangement. This repertoire is then shaped by intrathymic selection events to generate a peripheral T cell pool of self-MH restricted, non-autoaggressive T cells. Post-thymic interaction of alpha-beta TR with the pMH complexes shapes TR structural and functional avidity. The polypeptide is T cell receptor alpha joining 3 (Homo sapiens (Human)).